A 251-amino-acid polypeptide reads, in one-letter code: Octanoyltransferase (251 aa).

In terms of domain architecture, BPL/LPL catalytic spans 49 to 230; it reads DEIPDQLLIL…ALDDALAGRL (182 aa). Residues 87 to 94, 160 to 162, and 173 to 175 each bind substrate; these read RGGRITWH, AIG, and GVA. The active-site Acyl-thioester intermediate is the Cys-191.

The protein belongs to the LipB family.

It localises to the cytoplasm. The catalysed reaction is octanoyl-[ACP] + L-lysyl-[protein] = N(6)-octanoyl-L-lysyl-[protein] + holo-[ACP] + H(+). It participates in protein modification; protein lipoylation via endogenous pathway; protein N(6)-(lipoyl)lysine from octanoyl-[acyl-carrier-protein]: step 1/2. Its function is as follows. Catalyzes the transfer of endogenously produced octanoic acid from octanoyl-acyl-carrier-protein onto the lipoyl domains of lipoate-dependent enzymes. Lipoyl-ACP can also act as a substrate although octanoyl-ACP is likely to be the physiological substrate. This Corynebacterium glutamicum (strain R) protein is Octanoyltransferase.